A 273-amino-acid polypeptide reads, in one-letter code: Large ribosomal subunit protein uL2 (273 aa).

Positions 228 to 273 (VDHPHGGGEGKTSGGRHPVTPWGFPTKGKKTRKNKRTSKFIIKKRK) are disordered. Positions 254–273 (KGKKTRKNKRTSKFIIKKRK) are enriched in basic residues.

It belongs to the universal ribosomal protein uL2 family. As to quaternary structure, part of the 50S ribosomal subunit. Forms a bridge to the 30S subunit in the 70S ribosome.

In terms of biological role, one of the primary rRNA binding proteins. Required for association of the 30S and 50S subunits to form the 70S ribosome, for tRNA binding and peptide bond formation. It has been suggested to have peptidyltransferase activity; this is somewhat controversial. Makes several contacts with the 16S rRNA in the 70S ribosome. This chain is Large ribosomal subunit protein uL2, found in Rickettsia bellii (strain OSU 85-389).